We begin with the raw amino-acid sequence, 672 residues long: tRNA 5-methylaminomethyl-2-thiouridine biosynthesis bifunctional protein MnmC (672 aa).

The tract at residues 1 to 241 is tRNA (mnm(5)s(2)U34)-methyltransferase; sequence MHKVQFADVH…KRECLQGVKA (241 aa). The FAD-dependent cmnm(5)s(2)U34 oxidoreductase stretch occupies residues 269–672; the sequence is IGGGIASVFS…LLKGSQVKQG (404 aa).

The protein in the N-terminal section; belongs to the methyltransferase superfamily. tRNA (mnm(5)s(2)U34)-methyltransferase family. In the C-terminal section; belongs to the DAO family. The cofactor is FAD.

The protein resides in the cytoplasm. The enzyme catalyses 5-aminomethyl-2-thiouridine(34) in tRNA + S-adenosyl-L-methionine = 5-methylaminomethyl-2-thiouridine(34) in tRNA + S-adenosyl-L-homocysteine + H(+). Functionally, catalyzes the last two steps in the biosynthesis of 5-methylaminomethyl-2-thiouridine (mnm(5)s(2)U) at the wobble position (U34) in tRNA. Catalyzes the FAD-dependent demodification of cmnm(5)s(2)U34 to nm(5)s(2)U34, followed by the transfer of a methyl group from S-adenosyl-L-methionine to nm(5)s(2)U34, to form mnm(5)s(2)U34. The polypeptide is tRNA 5-methylaminomethyl-2-thiouridine biosynthesis bifunctional protein MnmC (Pasteurella multocida (strain Pm70)).